Consider the following 545-residue polypeptide: Labda-7,13-dienyl diphosphate synthase (545 aa).

A DXDDTA motif motif is present at residues 315–320 (DADDTA). The short motif at 444–450 (RRTDGSW) is the RXXDGSW motif element. The tract at residues 526–545 (LPAPAPVPPGFDAARTGPAD) is disordered.

Belongs to the terpene synthase family. Mg(2+) serves as cofactor.

It carries out the reaction (2E,6E,10E)-geranylgeranyl diphosphate = (13E)-labda-7,13-dien-15-yl diphosphate. Involved in the biosynthesis of the labdane-type bicyclic diterpene labda-7,13(16),14-triene. Catalyzes the conversion of geranylgeranyl diphosphate (GGDP) into labda-7,13(E)-dienyl diphosphate. The protein is Labda-7,13-dienyl diphosphate synthase of Streptomyces clavuligerus.